Consider the following 249-residue polypeptide: Putative ABC transporter ATP-binding protein GSU1281 (249 aa).

Residues 6 to 236 (VEVRDLCHCY…DELLATCRLE (231 aa)) form the ABC transporter domain. Residue 39-46 (GANGAGKS) participates in ATP binding.

This sequence belongs to the ABC transporter superfamily.

It localises to the cell inner membrane. Functionally, probably part of an ABC transporter complex. Responsible for energy coupling to the transport system. In Geobacter sulfurreducens (strain ATCC 51573 / DSM 12127 / PCA), this protein is Putative ABC transporter ATP-binding protein GSU1281.